The sequence spans 277 residues: Thymidylate synthase (277 aa).

Arg27 contributes to the dUMP binding site. Residue His57 participates in (6R)-5,10-methylene-5,6,7,8-tetrahydrofolate binding. 132-133 serves as a coordination point for dUMP; it reads RR. The Nucleophile role is filled by Cys152. DUMP contacts are provided by residues 179–182, Asn190, and 220–222; these read RSAD and HIY. Residue Asp182 coordinates (6R)-5,10-methylene-5,6,7,8-tetrahydrofolate. Ala276 contributes to the (6R)-5,10-methylene-5,6,7,8-tetrahydrofolate binding site.

Belongs to the thymidylate synthase family. Bacterial-type ThyA subfamily. Homodimer.

It localises to the cytoplasm. It catalyses the reaction dUMP + (6R)-5,10-methylene-5,6,7,8-tetrahydrofolate = 7,8-dihydrofolate + dTMP. Its pathway is pyrimidine metabolism; dTTP biosynthesis. Functionally, catalyzes the reductive methylation of 2'-deoxyuridine-5'-monophosphate (dUMP) to 2'-deoxythymidine-5'-monophosphate (dTMP) while utilizing 5,10-methylenetetrahydrofolate (mTHF) as the methyl donor and reductant in the reaction, yielding dihydrofolate (DHF) as a by-product. This enzymatic reaction provides an intracellular de novo source of dTMP, an essential precursor for DNA biosynthesis. The sequence is that of Thymidylate synthase from Acidovorax sp. (strain JS42).